Here is a 675-residue protein sequence, read N- to C-terminus: DNA ligase (675 aa).

Residues 32–36 (DAEYD), 81–82 (SL), and Glu113 contribute to the NAD(+) site. The active-site N6-AMP-lysine intermediate is the Lys115. Positions 136, 173, 291, and 315 each coordinate NAD(+). Zn(2+) is bound by residues Cys409, Cys412, Cys427, and Cys433. Positions 595–675 (SEKTYFFNKK…ELNSLIRIKE (81 aa)) constitute a BRCT domain.

This sequence belongs to the NAD-dependent DNA ligase family. LigA subfamily. Requires Mg(2+) as cofactor. Mn(2+) serves as cofactor.

The catalysed reaction is NAD(+) + (deoxyribonucleotide)n-3'-hydroxyl + 5'-phospho-(deoxyribonucleotide)m = (deoxyribonucleotide)n+m + AMP + beta-nicotinamide D-nucleotide.. In terms of biological role, DNA ligase that catalyzes the formation of phosphodiester linkages between 5'-phosphoryl and 3'-hydroxyl groups in double-stranded DNA using NAD as a coenzyme and as the energy source for the reaction. It is essential for DNA replication and repair of damaged DNA. The chain is DNA ligase from Buchnera aphidicola subsp. Acyrthosiphon pisum (strain APS) (Acyrthosiphon pisum symbiotic bacterium).